A 703-amino-acid polypeptide reads, in one-letter code: Antigen peptide transporter 2 (703 aa).

Topologically, residues 1–6 (MALSHP) are lumenal. The helical transmembrane segment at 7–27 (RPWASLLLVDLALLGLLQSSL) threads the bilayer. The Cytoplasmic segment spans residues 28–56 (GTLLPPGLPGLWLEGTLRLGVLWGLLKVG). The chain crosses the membrane as a helical span at residues 57 to 77 (GLLRLVGTFLPLLCLTNPLFF). Residues 78–98 (SLRALVGSTMSTSVVRVASAS) are Lumenal-facing. The chain crosses the membrane as a helical span at residues 99-119 (WGWLLADYGAVALSLAVWAVL). Topologically, residues 120–148 (SPAGAQEKEPGQENNRALMIRLLRLSKPD) are cytoplasmic. A helical transmembrane segment spans residues 149–169 (LPFLIVAFIFLAMAVWWEMFI). Positions 152–435 (LIVAFIFLAM…LVYMYGDMLS (284 aa)) constitute an ABC transmembrane type-1 domain. At 170 to 187 (PHYSGRVIDILGGDFDPD) the chain is on the lumenal side. Residues 188 to 208 (AFASAIFFMCLFSVGSSLSAG) traverse the membrane as a helical segment. The Cytoplasmic segment spans residues 209–266 (CRGGSFLFAESRINLRIREQLFSSLLRQDLAFFQETKTGELNSRLSSDTSLMSQWLSL). Residues 267–287 (NANILLRSLVKVVGLYYFMLQ) form a helical membrane-spanning segment. The Lumenal portion of the chain corresponds to 288–293 (VSPRLT). Residues 294–314 (FLSLLDLPLTIAAEKVYNPRH) traverse the membrane as a helical segment. The interval 301–389 (PLTIAAEKVY…QRVMALGMQV (89 aa)) is part of the peptide-binding site. Topologically, residues 315 to 374 (QAVLKEIQDAVAKAGQVVREAVGGLQTVRSFGAEEQEVRRYKEALERCRQLWWRRDLEKS) are cytoplasmic. Residues 375-395 (LYLVIQRVMALGMQVLILNVG) form a helical membrane-spanning segment. At 396-408 (VQQILAGEVTRGG) the chain is on the lumenal side. The helical transmembrane segment at 409-429 (LLSFLLYQEEVGHHVQNLVYM) threads the bilayer. A part of the peptide-binding site region spans residues 414 to 433 (LYQEEVGHHVQNLVYMYGDM). Topologically, residues 430 to 703 (YGDMLSNVGA…AHLVQQRLEA (274 aa)) are cytoplasmic. The ABC transporter domain occupies 468 to 702 (VEFQDVSFSY…YAHLVQQRLE (235 aa)). 503 to 510 (GPNGSGKS) lines the ATP pocket.

It belongs to the ABC transporter superfamily. ABCB family. MHC peptide exporter (TC 3.A.1.209) subfamily. As to quaternary structure, heterodimer of TAP1 and TAP2 (TAP1-TAP2). A component of the peptide loading complex (PLC), interacts via TAPBP with MHCI heterodimer; this interaction mediates peptide-MHCI assembly. The cofactor is Mg(2+).

Its subcellular location is the endoplasmic reticulum membrane. The enzyme catalyses a peptide antigen(in) + ATP + H2O = a peptide antigen(out) + ADP + phosphate + H(+). ABC transporter associated with antigen processing. In complex with TAP1 mediates unidirectional translocation of peptide antigens from cytosol to endoplasmic reticulum (ER) for loading onto MHC class I (MHCI) molecules. Uses the chemical energy of ATP to export peptides against the concentration gradient. During the transport cycle alternates between 'inward-facing' state with peptide binding site facing the cytosol to 'outward-facing' state with peptide binding site facing the ER lumen. Peptide antigen binding to ATP-loaded TAP1-TAP2 induces a switch to hydrolysis-competent 'outward-facing' conformation ready for peptide loading onto nascent MHCI molecules. Subsequently ATP hydrolysis resets the transporter to the 'inward facing' state for a new cycle. As a component of the peptide loading complex (PLC), acts as a molecular scaffold essential for peptide-MHCI assembly and antigen presentation. The protein is Antigen peptide transporter 2 (Tap2) of Rattus norvegicus (Rat).